Here is an 86-residue protein sequence, read N- to C-terminus: Sec-independent protein translocase protein TatA (86 aa).

The helical transmembrane segment at 1–21 threads the bilayer; that stretch reads MGISIWQLLIILAIVLVLFGA.

Belongs to the TatA/E family. As to quaternary structure, the Tat system comprises two distinct complexes: a TatABC complex, containing multiple copies of TatA, TatB and TatC subunits, and a separate TatA complex, containing only TatA subunits. Substrates initially bind to the TatABC complex, which probably triggers association of the separate TatA complex to form the active translocon.

It localises to the cell inner membrane. Functionally, part of the twin-arginine translocation (Tat) system that transports large folded proteins containing a characteristic twin-arginine motif in their signal peptide across membranes. TatA could form the protein-conducting channel of the Tat system. The polypeptide is Sec-independent protein translocase protein TatA (Hydrogenovibrio crunogenus (strain DSM 25203 / XCL-2) (Thiomicrospira crunogena)).